The chain runs to 388 residues: MYDFQGALKDIKNKGLYREFRNVNAAQGPYTVIDGRKMLMMSSNNYLGLCDDIRLKRAAIESIRKFGVGAGGSRLTCGNFELHRELEERLAKFKDVESCIVFGSGYAANIGAISGIADKNWVIFCDRLNHASIVDGIRLSGAKLVVYKHCDMEDLESKIVRYHTGKSLIVTDGVFSMDGDVAPVDRIVKLAKKYNLMTMVDDAHATGILGEKGRGTSEYFGLKDAVDISMGTLSKAFGVEGGFVAGKRKLVDFLRHKAKSFIYSTAPPPHNMAAALEALNIIETEPQARKELAEKSVWLRNRLIEKGFNVPKGVTPIIPLMVGDVNTAVEFSMLLYNEGIYIPAIRPPTVPKGTSRLRISIMASHSYEDMEFALKNLVRFGRKLGIIP.

Residue Arg-18 coordinates substrate. Position 105–106 (105–106 (GY)) interacts with pyridoxal 5'-phosphate. His-130 is a binding site for substrate. Residues Ser-176, 201–204 (DDAH), and 232–235 (TLSK) contribute to the pyridoxal 5'-phosphate site. Residue Lys-235 is modified to N6-(pyridoxal phosphate)lysine. Substrate is bound at residue Thr-349.

This sequence belongs to the class-II pyridoxal-phosphate-dependent aminotransferase family. BioF subfamily. Homodimer. Pyridoxal 5'-phosphate is required as a cofactor.

It carries out the reaction 6-carboxyhexanoyl-[ACP] + L-alanine + H(+) = (8S)-8-amino-7-oxononanoate + holo-[ACP] + CO2. It functions in the pathway cofactor biosynthesis; biotin biosynthesis. In terms of biological role, catalyzes the decarboxylative condensation of pimeloyl-[acyl-carrier protein] and L-alanine to produce 8-amino-7-oxononanoate (AON), [acyl-carrier protein], and carbon dioxide. This Acetivibrio thermocellus (strain ATCC 27405 / DSM 1237 / JCM 9322 / NBRC 103400 / NCIMB 10682 / NRRL B-4536 / VPI 7372) (Clostridium thermocellum) protein is Putative 8-amino-7-oxononanoate synthase (bioF).